The primary structure comprises 297 residues: N-acetylneuraminate lyase (297 aa).

Ser-47 and Thr-48 together coordinate aceneuramate. Tyr-137 (proton donor) is an active-site residue. Catalysis depends on Lys-165, which acts as the Schiff-base intermediate with substrate. 5 residues coordinate aceneuramate: Thr-167, Gly-189, Asp-191, Glu-192, and Ser-208.

It belongs to the DapA family. NanA subfamily. In terms of assembly, homotetramer.

It localises to the cytoplasm. It catalyses the reaction aceneuramate = aldehydo-N-acetyl-D-mannosamine + pyruvate. Its pathway is amino-sugar metabolism; N-acetylneuraminate degradation; D-fructose 6-phosphate from N-acetylneuraminate: step 1/5. In terms of biological role, catalyzes the reversible aldol cleavage of N-acetylneuraminic acid (sialic acid; Neu5Ac) to form pyruvate and N-acetylmannosamine (ManNAc) via a Schiff base intermediate. The protein is N-acetylneuraminate lyase of Salmonella choleraesuis (strain SC-B67).